The following is a 309-amino-acid chain: Protein FdhE (309 aa).

The protein belongs to the FdhE family.

Its subcellular location is the cytoplasm. Its function is as follows. Necessary for formate dehydrogenase activity. The protein is Protein FdhE of Salmonella paratyphi A (strain ATCC 9150 / SARB42).